A 1272-amino-acid chain; its full sequence is CST complex subunit CTC1 (1272 aa).

The protein belongs to the CTC1 family. Component of the CST complex, composed of CTC1, TEN1 and STN1. Interacts with POT1A.

It is found in the nucleus. The protein resides in the chromosome. The protein localises to the telomere. Its function is as follows. Component of the CST complex, a complex that binds to single-stranded DNA and is required to protect telomeres from DNA degradation. The CST complex binds single-stranded DNA with high affinity in a sequence-independent manner, while isolated subunits bind DNA with low affinity by themselves. Associates with enzymatically active telomerase. The sequence is that of CST complex subunit CTC1 from Arabidopsis thaliana (Mouse-ear cress).